The following is a 199-amino-acid chain: Ion-translocating oxidoreductase complex subunit A (199 aa).

6 helical membrane-spanning segments follow: residues 8 to 28 (LFTI…QFLG), 49 to 69 (VVFV…FILV), 75 to 95 (FLRT…VEFI), 106 to 126 (SLGI…AVLL), 138 to 158 (VVFG…MAAI), and 178 to 198 (AFFI…VIPL).

This sequence belongs to the NqrDE/RnfAE family. In terms of assembly, the Rnf complex is probably composed of eight subunits, including RnfA, RnfB, RnfC, RnfD, RnfE and RnfG.

Its subcellular location is the cell membrane. Its function is as follows. Part of a membrane-bound complex that couples electron transfer with translocation of ions across the membrane. Catalyzes Na(+) transport, most probably coupled to electron transfer from reduced ferredoxin to methanophenazine and heterodisulfide reductase. Involved in heterodisulfide reduction during methanogenesis from acetate. This Methanosarcina acetivorans (strain ATCC 35395 / DSM 2834 / JCM 12185 / C2A) protein is Ion-translocating oxidoreductase complex subunit A.